The chain runs to 1165 residues: uncharacterized protein (1165 aa).

The tract at residues 422 to 442 is disordered; the sequence is EAAPPRPPRKSKAPEPTGDKA.

This is an uncharacterized protein from Frog virus 3 (isolate Goorha) (FV-3).